Consider the following 392-residue polypeptide: Adenosine 3'-phospho 5'-phosphosulfate transporter 2 (392 aa).

A disordered region spans residues 11 to 35 (NINGSASGQQAPTSNSPTLTRKSSS). 10 consecutive transmembrane segments (helical) span residues 62–82 (CAGV…IFTV), 87–107 (PFGW…GLVE), 136–156 (LVLA…LGYL), 159–179 (PTQV…SILI), 185–205 (GPLD…FTLA), 212–232 (NFNL…AAIG), 249–269 (VVFY…LVTG), 286–306 (FGYG…VLAL), 314–334 (IAAT…FVLF), and 338–358 (FTVQ…LNVY).

Belongs to the nucleotide-sugar transporter family. SLC35B subfamily.

It localises to the golgi apparatus membrane. Mediates the transport of adenosine 3'-phospho 5'-phosphosulfate (PAPS), from cytosol into Golgi. PAPS is a universal sulfuryl donor for sulfation events that take place in the Golgi. Essential for viability. Involved in glycosaminoglycan synthesis and the subsequent signaling. May be involved in hh and dpp signaling by controlling the sulfation of heparan sulfate (HS). This is Adenosine 3'-phospho 5'-phosphosulfate transporter 2 from Drosophila pseudoobscura pseudoobscura (Fruit fly).